The following is a 728-amino-acid chain: Elongation factor 2 (728 aa).

The 241-residue stretch at 18-258 (KFIRNIGIVA…MVIRHLPSPI (241 aa)) folds into the tr-type G domain. Residues 27–34 (AHIDHGKT), 93–97 (DTPGH), and 147–150 (NKVD) contribute to the GTP site. A Diphthamide modification is found at His-594.

This sequence belongs to the TRAFAC class translation factor GTPase superfamily. Classic translation factor GTPase family. EF-G/EF-2 subfamily.

It is found in the cytoplasm. In terms of biological role, catalyzes the GTP-dependent ribosomal translocation step during translation elongation. During this step, the ribosome changes from the pre-translocational (PRE) to the post-translocational (POST) state as the newly formed A-site-bound peptidyl-tRNA and P-site-bound deacylated tRNA move to the P and E sites, respectively. Catalyzes the coordinated movement of the two tRNA molecules, the mRNA and conformational changes in the ribosome. In Archaeoglobus fulgidus (strain ATCC 49558 / DSM 4304 / JCM 9628 / NBRC 100126 / VC-16), this protein is Elongation factor 2 (fusA).